Reading from the N-terminus, the 920-residue chain is Puromycin-sensitive aminopeptidase (920 aa).

Residues E181 and 317–321 contribute to the substrate site; that span reads GAMEN. H353 is a Zn(2+) binding site. The active-site Proton acceptor is the E354. Zn(2+) contacts are provided by H357 and E376. Y465 carries the 3'-nitrotyrosine modification. Positions 727–731 match the Nuclear localization signal motif; it reads RRRFK.

Belongs to the peptidase M1 family. In terms of assembly, monomer. It depends on Zn(2+) as a cofactor. As to expression, widely expressed. Highest expression in brain, particularly the striatum and hippocampus. Expressed in Sertoli cells.

Its subcellular location is the cytoplasm. It is found in the cytosol. The protein localises to the nucleus. The catalysed reaction is Release of an N-terminal amino acid, preferentially alanine, from a wide range of peptides, amides and arylamides.. Strongly inhibited by bestatin, leuhistin, actinonin, amastatin, 1,10-phenanthroline, DFP, PCMBS, Zn(2+), Cd(2+), Co(2+), Cu(2+), Hg(2+), EDTA and puromycin. Not inhibited by PMSF, and only slightly inhibited by leupeptin and aprotinin. Activity is increased by Mg(2+) and Ca(2+). Functionally, aminopeptidase with broad substrate specificity for several peptides. Involved in proteolytic events essential for cell growth and viability. May act as regulator of neuropeptide activity. Plays a role in the antigen-processing pathway for MHC class I molecules. Involved in the N-terminal trimming of cytotoxic T-cell epitope precursors. Digests the poly-Q peptides found in many cellular proteins. The chain is Puromycin-sensitive aminopeptidase (Npepps) from Mus musculus (Mouse).